The chain runs to 249 residues: Probable transcriptional regulatory protein Tfu_2096 (249 aa).

This sequence belongs to the TACO1 family.

Its subcellular location is the cytoplasm. This Thermobifida fusca (strain YX) protein is Probable transcriptional regulatory protein Tfu_2096.